The chain runs to 201 residues: MLQHLRPTLVLGVALTLLTGLAYPLAMTGLAGILFPVEAAGSLVERDGKVVGSRLIGQSFTGDRFFHGRPSATTAPDPTDASKTMPAPYNAANSGGSNLGPTSAALADRVKADVERLRAENPGAPVPVDLVTTSGSGLDPDISPEAALFQVPRIAKARHLPEERLRDLVAAQVQGRTLGLIGEPRVNVLALNLALDELAGK.

Residues 17–37 traverse the membrane as a helical segment; sequence LLTGLAYPLAMTGLAGILFPV.

This sequence belongs to the KdpC family. The system is composed of three essential subunits: KdpA, KdpB and KdpC.

The protein localises to the cell inner membrane. Functionally, part of the high-affinity ATP-driven potassium transport (or Kdp) system, which catalyzes the hydrolysis of ATP coupled with the electrogenic transport of potassium into the cytoplasm. This subunit acts as a catalytic chaperone that increases the ATP-binding affinity of the ATP-hydrolyzing subunit KdpB by the formation of a transient KdpB/KdpC/ATP ternary complex. This is Potassium-transporting ATPase KdpC subunit from Methylobacterium nodulans (strain LMG 21967 / CNCM I-2342 / ORS 2060).